Consider the following 254-residue polypeptide: 3-oxo-5-alpha-steroid 4-dehydrogenase 2 (254 aa).

A run of 4 helical transmembrane segments spans residues 8 to 28 (VPVL…LCFG), 72 to 92 (PRSL…AHYF), 146 to 166 (FSVG…SDCM), and 206 to 226 (LATW…FLGM).

This sequence belongs to the steroid 5-alpha reductase family.

It is found in the microsome membrane. The protein localises to the endoplasmic reticulum membrane. The enzyme catalyses a 3-oxo-5alpha-steroid + NADP(+) = a 3-oxo-Delta(4)-steroid + NADPH + H(+). It carries out the reaction 17beta-hydroxy-5alpha-androstan-3-one + NADP(+) = testosterone + NADPH + H(+). The catalysed reaction is 5alpha-pregnane-3,20-dione + NADP(+) = progesterone + NADPH + H(+). In terms of biological role, converts testosterone (T) into 5-alpha-dihydrotestosterone (DHT) and progesterone or corticosterone into their corresponding 5-alpha-3-oxosteroids. It plays a central role in sexual differentiation and androgen physiology. In Mus musculus (Mouse), this protein is 3-oxo-5-alpha-steroid 4-dehydrogenase 2 (Srd5a2).